Here is a 274-residue protein sequence, read N- to C-terminus: Diaminopimelate epimerase (274 aa).

Positions 11 and 60 each coordinate substrate. C69 serves as the catalytic Proton donor. Residues 70–71 (GN), N191, and 209–210 (ER) contribute to the substrate site. C218 acts as the Proton acceptor in catalysis. 219–220 (GS) serves as a coordination point for substrate.

The protein belongs to the diaminopimelate epimerase family. In terms of assembly, homodimer.

Its subcellular location is the cytoplasm. The catalysed reaction is (2S,6S)-2,6-diaminopimelate = meso-2,6-diaminopimelate. The protein operates within amino-acid biosynthesis; L-lysine biosynthesis via DAP pathway; DL-2,6-diaminopimelate from LL-2,6-diaminopimelate: step 1/1. Functionally, catalyzes the stereoinversion of LL-2,6-diaminopimelate (L,L-DAP) to meso-diaminopimelate (meso-DAP), a precursor of L-lysine and an essential component of the bacterial peptidoglycan. This chain is Diaminopimelate epimerase, found in Caldanaerobacter subterraneus subsp. tengcongensis (strain DSM 15242 / JCM 11007 / NBRC 100824 / MB4) (Thermoanaerobacter tengcongensis).